The chain runs to 112 residues: Cell cycle protein GpsB (112 aa).

Positions tyrosine 42–arginine 77 form a coiled coil. Residues threonine 75 to aspartate 97 form a disordered region. Over residues asparagine 81 to asparagine 95 the composition is skewed to low complexity.

It belongs to the GpsB family. In terms of assembly, forms polymers through the coiled coil domains. Interacts with PBP1, MreC and EzrA.

It is found in the cytoplasm. In terms of biological role, divisome component that associates with the complex late in its assembly, after the Z-ring is formed, and is dependent on DivIC and PBP2B for its recruitment to the divisome. Together with EzrA, is a key component of the system that regulates PBP1 localization during cell cycle progression. Its main role could be the removal of PBP1 from the cell pole after pole maturation is completed. Also contributes to the recruitment of PBP1 to the division complex. Not essential for septum formation. The protein is Cell cycle protein GpsB of Staphylococcus haemolyticus (strain JCSC1435).